Reading from the N-terminus, the 263-residue chain is Oxygen-evolving enhancer protein 2-1, chloroplastic (263 aa).

S153 bears the Phosphoserine mark.

Belongs to the PsbP family. As to quaternary structure, interacts with WAK1.

It localises to the plastid. The protein resides in the chloroplast thylakoid lumen. Functionally, may be involved in the regulation of photosystem II. The sequence is that of Oxygen-evolving enhancer protein 2-1, chloroplastic (PSBP1) from Arabidopsis thaliana (Mouse-ear cress).